Here is a 245-residue protein sequence, read N- to C-terminus: 3-deoxy-manno-octulosonate cytidylyltransferase (245 aa).

This sequence belongs to the KdsB family.

The protein localises to the cytoplasm. The enzyme catalyses 3-deoxy-alpha-D-manno-oct-2-ulosonate + CTP = CMP-3-deoxy-beta-D-manno-octulosonate + diphosphate. It participates in nucleotide-sugar biosynthesis; CMP-3-deoxy-D-manno-octulosonate biosynthesis; CMP-3-deoxy-D-manno-octulosonate from 3-deoxy-D-manno-octulosonate and CTP: step 1/1. The protein operates within bacterial outer membrane biogenesis; lipopolysaccharide biosynthesis. Activates KDO (a required 8-carbon sugar) for incorporation into bacterial lipopolysaccharide in Gram-negative bacteria. This Rhodopseudomonas palustris (strain ATCC BAA-98 / CGA009) protein is 3-deoxy-manno-octulosonate cytidylyltransferase.